The primary structure comprises 89 residues: Small ribosomal subunit protein uS15 (89 aa).

The protein belongs to the universal ribosomal protein uS15 family. In terms of assembly, part of the 30S ribosomal subunit. Forms a bridge to the 50S subunit in the 70S ribosome, contacting the 23S rRNA.

In terms of biological role, one of the primary rRNA binding proteins, it binds directly to 16S rRNA where it helps nucleate assembly of the platform of the 30S subunit by binding and bridging several RNA helices of the 16S rRNA. Functionally, forms an intersubunit bridge (bridge B4) with the 23S rRNA of the 50S subunit in the ribosome. This is Small ribosomal subunit protein uS15 from Cereibacter sphaeroides (strain ATCC 17025 / ATH 2.4.3) (Rhodobacter sphaeroides).